A 481-amino-acid chain; its full sequence is Protein JASON (481 aa).

Residues glutamate 226–glycine 250 form a disordered region. Positions serine 232 to glycine 241 are enriched in low complexity.

Its function is as follows. Required for normal spindle orientation at male meiosis II and normal formation of tetrad of microspores. Acts as a positive regulator of PS1 in male sporogenesis. Not involved in female meiosis. This chain is Protein JASON, found in Arabidopsis thaliana (Mouse-ear cress).